A 478-amino-acid chain; its full sequence is Cysteine--tRNA ligase (478 aa).

Cys29 is a Zn(2+) binding site. The short motif at Pro31–Asn41 is the 'HIGH' region element. Cys216, His241, and Glu245 together coordinate Zn(2+). Positions Lys274–Ser278 match the 'KMSKS' region motif. Residue Lys277 participates in ATP binding.

It belongs to the class-I aminoacyl-tRNA synthetase family. Monomer. Zn(2+) is required as a cofactor.

It localises to the cytoplasm. The enzyme catalyses tRNA(Cys) + L-cysteine + ATP = L-cysteinyl-tRNA(Cys) + AMP + diphosphate. This is Cysteine--tRNA ligase from Orientia tsutsugamushi (strain Ikeda) (Rickettsia tsutsugamushi).